The chain runs to 246 residues: NAD(P)H-quinone oxidoreductase subunit K (246 aa).

Positions 62, 63, 127, and 158 each coordinate [4Fe-4S] cluster.

Belongs to the complex I 20 kDa subunit family. As to quaternary structure, NDH-1 can be composed of about 15 different subunits; different subcomplexes with different compositions have been identified which probably have different functions. [4Fe-4S] cluster serves as cofactor.

The protein resides in the cellular thylakoid membrane. It carries out the reaction a plastoquinone + NADH + (n+1) H(+)(in) = a plastoquinol + NAD(+) + n H(+)(out). It catalyses the reaction a plastoquinone + NADPH + (n+1) H(+)(in) = a plastoquinol + NADP(+) + n H(+)(out). Its function is as follows. NDH-1 shuttles electrons from an unknown electron donor, via FMN and iron-sulfur (Fe-S) centers, to quinones in the respiratory and/or the photosynthetic chain. The immediate electron acceptor for the enzyme in this species is believed to be plastoquinone. Couples the redox reaction to proton translocation, and thus conserves the redox energy in a proton gradient. Cyanobacterial NDH-1 also plays a role in inorganic carbon-concentration. The polypeptide is NAD(P)H-quinone oxidoreductase subunit K (Parasynechococcus marenigrum (strain WH8102)).